Reading from the N-terminus, the 408-residue chain is Putative odorant receptor 92a (408 aa).

The Cytoplasmic segment spans residues 1 to 52 (MLFRKRKPKSDDEVITFDELTRFPMTFYKTIGEDLYSDRDPNVIRRYLLRFY). A helical transmembrane segment spans residues 53–73 (LVLGFLNFNAYVVGEIAYFIV). A topological domain (extracellular) is located at residue His74. A helical transmembrane segment spans residues 75-95 (IMSTTTLLEATAVAPCIGFSF). The Cytoplasmic portion of the chain corresponds to 96-144 (MADFKQFGLTVNRKRLVRLLDDLKEIFPLDLEAQRKYNVSFYRKHMNRV). Residues 145-165 (MTLFTILCMTYTSSFSFYPAI) form a helical membrane-spanning segment. Over 166–209 (KSTIKYYLMGSEIFERNYGFHILFPYDAETDLTVYWFSYWGLAH) the chain is Extracellular. The helical transmembrane segment at 210–230 (CAYVAGVSYVCVDLLLIATIT) threads the bilayer. Topologically, residues 231 to 276 (QLTMHFNFIANDLEAYEGGDHTDEENIKYLHNLVVYHARALDLSEE) are cytoplasmic. A helical membrane pass occupies residues 277–301 (VNNIFSFLILWNFIAASLVICFAGF). The Extracellular portion of the chain corresponds to 302–310 (QITASNVED). Residues 311–331 (IVLYFIFFSASLVQVFVVCYY) form a helical membrane-spanning segment. Residues 332 to 378 (GDEMISSSSRIGHSAFNQNWLPCSTKYKRILQFIIARSQKPASIRPP) are Cytoplasmic-facing. The helical transmembrane segment at 379 to 399 (TFPPISFNTFMKVISMSYQFF) threads the bilayer. At 400–408 (ALLRTTYYG) the chain is on the extracellular side.

This sequence belongs to the insect chemoreceptor superfamily. Heteromeric odorant receptor channel (TC 1.A.69) family. Or49a subfamily. Interacts with Orco. Complexes exist early in the endomembrane system in olfactory sensory neurons (OSNs), coupling these complexes to the conserved ciliary trafficking pathway.

It localises to the cell membrane. Odorant receptor which mediates acceptance or avoidance behavior, depending on its substrates. The odorant receptor repertoire encodes a large collection of odor stimuli that vary widely in identity, intensity, and duration. May form a complex with Orco to form odorant-sensing units, providing sensitive and prolonged odorant signaling and calcium permeability. The chain is Putative odorant receptor 92a (Or92a) from Drosophila melanogaster (Fruit fly).